The following is a 353-amino-acid chain: Vomeronasal type-1 receptor 1 (353 aa).

Topologically, residues 1 to 56 are extracellular; sequence MVGDTLKLLSPLMTRYFFLLFYSTDSSDLNENQHPLDFDEMAFGKVKSGISFLIQT. Residues 57 to 77 form a helical membrane-spanning segment; that stretch reads GVGILGNSFLLCFYNLILFTG. The Cytoplasmic segment spans residues 78–84; the sequence is HKLRPTD. The helical transmembrane segment at 85-105 threads the bilayer; sequence LILSQLALANSMVLFFKGIPQ. The Extracellular portion of the chain corresponds to 106–132; the sequence is TMAAFGLKYLLNDTGCKFVFYYHRVGT. N-linked (GlcNAc...) asparagine glycosylation is present at asparagine 117. The chain crosses the membrane as a helical span at residues 133–153; that stretch reads RVSLSTICLLNGFQAIKLNPS. The Cytoplasmic segment spans residues 154–169; that stretch reads ICRWMEIKIRSPRFID. A helical transmembrane segment spans residues 170 to 190; sequence FCCLLCWAPHVLMNASVLLLV. Residues 191 to 226 are Extracellular-facing; that stretch reads NGPLNSKNSSAKNNYGYCSYKASKRFSSLHAVLYFS. Asparagine 198 is a glycosylation site (N-linked (GlcNAc...) asparagine). A helical transmembrane segment spans residues 227–247; sequence PDFMSLGFMVWASGSMVFFLY. The Cytoplasmic segment spans residues 248–274; it reads RHKQQVQHNHSNRLSCRPSQEARATHT. The helical transmembrane segment at 275–295 threads the bilayer; sequence IMVLVSSFFVFYSVHSFLTIW. The Extracellular portion of the chain corresponds to 296–303; the sequence is TTVVANPG. The helical transmembrane segment at 304–324 threads the bilayer; that stretch reads QWIVTNSVLVASCFPARSPFV. Residues 325-353 lie on the Cytoplasmic side of the membrane; the sequence is LIMSDTHISQFCFACRTRKTLFPNLVVMP.

This sequence belongs to the G-protein coupled receptor 1 family. As to expression, expressed in the olfactory mucosa, very low expression in brain, lung and kidney.

The protein resides in the cell membrane. In terms of biological role, putative pheromone receptor. The sequence is that of Vomeronasal type-1 receptor 1 (VN1R1) from Homo sapiens (Human).